Here is a 68-residue protein sequence, read N- to C-terminus: Large ribosomal subunit protein bL32 (68 aa).

Belongs to the bacterial ribosomal protein bL32 family.

The sequence is that of Large ribosomal subunit protein bL32 from Ruegeria pomeroyi (strain ATCC 700808 / DSM 15171 / DSS-3) (Silicibacter pomeroyi).